Reading from the N-terminus, the 376-residue chain is MQWTSLLLLAGLFSLSQAQYEDDPHWWFHYLRSQQSTYYDPYDPYPYETYEPYPYGVDEGPAYTYGSPSPPDPRDCPQECDCPPNFPTAMYCDNRNLKYLPFVPSRMKYVYFQNNQITSIQEGVFDNATGLLWIALHGNQITSDKVGRKVFSKLRHLERLYLDHNNLTRMPGPLPRSLRELHLDHNQISRVPNNALEGLENLTALYLQHNEIQEVGSSMRGLRSLILLDLSYNHLRKVPDGLPSALEQLYMEHNNVYTVPDSYFRGAPKLLYVRLSHNSLTNNGLASNTFNSSSLLELDLSYNQLQKIPPVNTNLENLYLQGNRINEFSISSFCTVVDVVNFSKLQVLRLDGNEIKRSAMPADAPLCLRLASLIEI.

Positions 1–18 (MQWTSLLLLAGLFSLSQA) are cleaved as a signal peptide. Pyrrolidone carboxylic acid is present on glutamine 19. Sulfotyrosine is present on residues tyrosine 20, tyrosine 38, tyrosine 39, tyrosine 45, tyrosine 47, tyrosine 53, and tyrosine 55. The LRRNT domain occupies 67–105 (SPSPPDPRDCPQECDCPPNFPTAMYCDNRNLKYLPFVPS). LRR repeat units follow at residues 106–127 (RMKY…VFDN), 130–151 (GLLW…RKVF), 156–176 (HLER…PLPR), 177–198 (SLRE…ALEG), 201–222 (NLTA…MRGL), 224–245 (SLIL…LPSA), 246–266 (LEQL…YFRG), and 269–289 (KLLY…ASNT). The N-linked (GlcNAc...) (keratan sulfate) asparagine glycan is linked to asparagine 127. Asparagine 166 is a glycosylation site (N-linked (GlcNAc...) (keratan sulfate) asparagine). Asparagine 201 carries N-linked (GlcNAc...) (keratan sulfate) asparagine glycosylation. Asparagine 291 is a glycosylation site (N-linked (GlcNAc...) (keratan sulfate) asparagine). LRR repeat units follow at residues 294–315 (SLLE…NTNL) and 316–335 (ENLY…SFCT). An intrachain disulfide couples cysteine 334 to cysteine 367. The N-linked (GlcNAc...) asparagine glycan is linked to asparagine 341. One copy of the LRR 11 repeat lies at 344–365 (KLQVLRLDGNEIKRSAMPADAP).

Belongs to the small leucine-rich proteoglycan (SLRP) family. SLRP class II subfamily. Binds to type I and type II collagen. In terms of processing, binds keratan sulfate chains.

The protein resides in the secreted. It localises to the extracellular space. The protein localises to the extracellular matrix. Functionally, affects the rate of fibrils formation. May have a primary role in collagen fibrillogenesis. The sequence is that of Fibromodulin (FMOD) from Homo sapiens (Human).